Consider the following 620-residue polypeptide: Chaperone protein DnaK (620 aa).

Threonine 197 carries the phosphothreonine; by autocatalysis modification. Residues alanine 597–glutamate 620 are disordered.

The protein belongs to the heat shock protein 70 family.

Functionally, acts as a chaperone. The polypeptide is Chaperone protein DnaK (Helicobacter pylori (strain Shi470)).